The sequence spans 97 residues: uncharacterized protein (97 aa).

A disordered region spans residues 38 to 97 (TSPPDWNKFSGKVSINEPTTSKSKSKSTSTSTSTSTSTSTSTSTSSSTSSTSSTTSSINK). The span at 56–97 (TTSKSKSKSTSTSTSTSTSTSTSTSTSSSTSSTSSTTSSINK) shows a compositional bias: low complexity.

This is an uncharacterized protein from Dictyostelium discoideum (Social amoeba).